The sequence spans 453 residues: Homeobox protein meis3 (453 aa).

Positions 33 to 64 are disordered; sequence HHSLSQSAPYGSTGAAHRVPMPPGMGSNDGLK. Residues 102 to 185 enclose the MEIS N-terminal domain; the sequence is GGDVCSSDSF…PIDLVIDDRD (84 aa). Residues 192–272 are disordered; that stretch reads LEDFTGSCTS…RDKKRNKKRG (81 aa). Residues 197–209 are compositionally biased toward polar residues; sequence GSCTSLSDQNNSW. Positions 218-230 are enriched in low complexity; that stretch reads STHSGTPGPSSGG. A compositionally biased stretch (polar residues) spans 231 to 242; it reads LASQSGDNSSEQ. A DNA-binding region (homeobox) is located at residues 267 to 329; it reads RNKKRGIFPK…NARRRIVQPM (63 aa).

Belongs to the TALE/MEIS homeobox family.

The protein localises to the nucleus. Functionally, a caudalizing protein which is required to pattern the anterior/posterior (A/P) axis during central nervous system (CNS) formation. Inhibits anterior neural expression and acts as a transcriptional activator to induce posterior neural gene expression. Maintains a proper A/P balance required for hindbrain formation by activating the FGF/MAPK pathway, which modulates the planar cell polarity (PCP) pathway. Interacts with retinoid signaling during hindbrain patterning. This is Homeobox protein meis3 from Xenopus tropicalis (Western clawed frog).